Consider the following 355-residue polypeptide: NAD-dependent protein deacylase sirtuin-6 (355 aa).

Residue Ser-2 is modified to N-acetylserine. The residue at position 10 (Ser-10) is a Phosphoserine. One can recognise a Deacetylase sirtuin-type domain in the interval 27–272 (PEELERKVWE…TRLMKHLGLE (246 aa)). Position 33 is an N6-acetyllysine (Lys-33). Residues Ala-53, Thr-57, Phe-64, Arg-65, Trp-71, Gln-113, and His-133 each contribute to the NAD(+) site. His-133 functions as the Proton acceptor in the catalytic mechanism. Zn(2+) contacts are provided by Cys-141, Cys-144, and Cys-166. Lys-170 is covalently cross-linked (Glycyl lysine isopeptide (Lys-Gly) (interchain with G-Cter in ubiquitin)). Cys-177 serves as a coordination point for Zn(2+). Residues Gly-214, Ser-216, Asn-240, Gln-242, and Val-258 each coordinate NAD(+). The disordered stretch occupies residues 284–355 (RALPPLPRPP…KRVKAEAVPS (72 aa)). The span at 287–296 (PPLPRPPTPK) shows a compositional bias: pro residues. Residue Thr-294 is modified to Phosphothreonine. Phosphoserine occurs at positions 303 and 330.

The protein belongs to the sirtuin family. Class IV subfamily. Homodimer; binds to nucleosomes and DNA ends as a homodimer. Interacts with RELA; interferes with RELA binding to target DNA. Interacts with SMARCA5; promoting recruitment of SMARCA5/SNF2H to double-strand breaks (DSBs) sites. Interacts with the mTORC2 complex; preventing the ability of SIRT6 to deacetylate FOXO1. Interacts with the CLOCK-BMAL1 complex; recruited by the CLOCK-BMAL1 complex to regulate expression of clock-controlled genes. Interacts with CSNK2A2; preventing CSNK2A2 localization to the nucleus. In terms of processing, acetylated at Lys-33. Deacetylation at Lys-33 by SIRT1 promotes homomultimerization and binding to double-strand breaks (DSBs) sites. Phosphorylation at Ser-10 by MAPK8/JNK1 in response to oxidative stress stimulates the mono-ADP-ribosyltransferase activity on PARP1, leading to PARP1 recruitment to double-strand breaks (DSBs). Post-translationally, monoubiquitinated at Lys-170 by STUB1/CHIP, preventing its degradation by the proteasome. In terms of processing, sumoylated, leading to specifically decrease ability to deacetylate histone H3 at 'Lys-56' (H3K56ac).

The protein resides in the nucleus. The protein localises to the chromosome. It is found in the telomere. It localises to the endoplasmic reticulum. It carries out the reaction N(6)-acetyl-L-lysyl-[protein] + NAD(+) + H2O = 2''-O-acetyl-ADP-D-ribose + nicotinamide + L-lysyl-[protein]. The catalysed reaction is N(6)-tetradecanoyl-L-lysyl-[protein] + NAD(+) + H2O = 2''-O-tetradecanoyl-ADP-D-ribose + nicotinamide + L-lysyl-[protein]. It catalyses the reaction N(6)-hexadecanoyl-L-lysyl-[protein] + NAD(+) + H2O = 2''-O-hexadecanoyl-ADP-D-ribose + nicotinamide + L-lysyl-[protein]. The enzyme catalyses L-lysyl-[protein] + NAD(+) = N(6)-(ADP-D-ribosyl)-L-lysyl-[protein] + nicotinamide + H(+). It carries out the reaction L-arginyl-[protein] + NAD(+) = N(omega)-(ADP-D-ribosyl)-L-arginyl-[protein] + nicotinamide + H(+). With respect to regulation, compared to the defatty-acylase activity, the protein deacetylase activity is weak in vitro, and requires activation. The histone deacetylase activity is strongly activated upon binding to nucleosomes and chromatin in vivo. Two molecules of SIRT6 associate with the acidic patch of one nucleosome, while the C-terminal disordered region of SIRT6 associates with nucleosomal DNA, leading to efficient histone deacetylation. The protein-lysine deacetylase activity is also activated by long-chain free fatty-acids. In terms of biological role, NAD-dependent protein deacetylase, deacylase and mono-ADP-ribosyltransferase that plays an essential role in DNA damage repair, telomere maintenance, metabolic homeostasis, inflammation, tumorigenesis and aging. Displays protein-lysine deacetylase or defatty-acylase (demyristoylase and depalmitoylase) activity, depending on the context. Acts as a key histone deacetylase by catalyzing deacetylation of histone H3 at 'Lys-9', 'Lys-18' and 'Lys-56' (H3K9ac, H3K18ac and H3K56ac, respectively), suppressing target gene expression of several transcription factors, including NF-kappa-B. Acts as an inhibitor of transcription elongation by mediating deacetylation of H3K9ac and H3K56ac, preventing release of NELFE from chromatin and causing transcriptional pausing. Involved in DNA repair by promoting double-strand break (DSB) repair: acts as a DSB sensor by recognizing and binding DSB sites, leading to (1) recruitment of DNA repair proteins, such as SMARCA5/SNF2H, and (2) deacetylation of histone H3K9ac and H3K56ac. SIRT6 participation to DSB repair is probably involved in extension of life span. Also promotes DNA repair by deacetylating non-histone proteins, such as DDB2 and p53/TP53. Specifically deacetylates H3K18ac at pericentric heterochromatin, thereby maintaining pericentric heterochromatin silencing at centromeres and protecting against genomic instability and cellular senescence. Involved in telomere maintenance by catalyzing deacetylation of histone H3 in telomeric chromatin, regulating telomere position effect and telomere movement in response to DNA damage. Required for embryonic stem cell differentiation by mediating histone deacetylation of H3K9ac. Plays a major role in metabolism by regulating processes such as glycolysis, gluconeogenesis, insulin secretion and lipid metabolism. Inhibits glycolysis via histone deacetylase activity and by acting as a corepressor of the transcription factor HIF1A, thereby controlling the expression of multiple glycolytic genes. Has tumor suppressor activity by repressing glycolysis, thereby inhibiting the Warburg effect. Also regulates glycolysis and tumorigenesis by mediating deacetylation and nuclear export of non-histone proteins, such as isoform M2 of PKM (PKM2). Acts as a negative regulator of gluconeogenesis by mediating deacetylation of non-histone proteins, such as FOXO1 and KAT2A/GCN5. Promotes beta-oxidation of fatty acids during fasting by catalyzing deacetylation of NCOA2, inducing coactivation of PPARA. Acts as a regulator of lipid catabolism in brown adipocytes, both by catalyzing deacetylation of histones and non-histone proteins, such as FOXO1. Also acts as a regulator of circadian rhythms, both by regulating expression of clock-controlled genes involved in lipid and carbohydrate metabolism, and by catalyzing deacetylation of PER2. The defatty-acylase activity is specifically involved in regulation of protein secretion. Has high activity toward long-chain fatty acyl groups and mediates protein-lysine demyristoylation and depalmitoylation of target proteins, such as RRAS2 and TNF, thereby regulating their secretion. Also acts as a mono-ADP-ribosyltransferase by mediating mono-ADP-ribosylation of PARP1, TRIM28/KAP1 or SMARCC2/BAF170. Mono-ADP-ribosyltransferase activity is involved in DNA repair, cellular senescence, repression of LINE-1 retrotransposon elements and regulation of transcription. The chain is NAD-dependent protein deacylase sirtuin-6 from Macaca fascicularis (Crab-eating macaque).